A 137-amino-acid polypeptide reads, in one-letter code: Nucleoside diphosphate kinase (137 aa).

Residues lysine 9, phenylalanine 57, arginine 85, threonine 91, arginine 102, and asparagine 112 each contribute to the ATP site. Catalysis depends on histidine 115, which acts as the Pros-phosphohistidine intermediate.

Belongs to the NDK family. Homotetramer. Requires Mg(2+) as cofactor.

The protein localises to the cytoplasm. The catalysed reaction is a 2'-deoxyribonucleoside 5'-diphosphate + ATP = a 2'-deoxyribonucleoside 5'-triphosphate + ADP. The enzyme catalyses a ribonucleoside 5'-diphosphate + ATP = a ribonucleoside 5'-triphosphate + ADP. Functionally, major role in the synthesis of nucleoside triphosphates other than ATP. The ATP gamma phosphate is transferred to the NDP beta phosphate via a ping-pong mechanism, using a phosphorylated active-site intermediate. The polypeptide is Nucleoside diphosphate kinase (Leptospira biflexa serovar Patoc (strain Patoc 1 / ATCC 23582 / Paris)).